A 189-amino-acid chain; its full sequence is MEKIPYAILEKGSLLLASPDTDQGVFARSVILLCEHSLNGSFGLILNKTLGLELADDIFSFDKVTNNNIRFCMGGPLQANQMMLLHSCSEIPEQTLEICPSVYLGGDLSFLQEIAASDAGPMINLCFGYSGWQAGQLEREFLDGNWFLAPASYDYVFMDNPENLWSKILKDLGGKYASLSTVPENLFLN.

Belongs to the UPF0301 (AlgH) family.

In Chlamydia felis (strain Fe/C-56) (Chlamydophila felis), this protein is UPF0301 protein CF0373.